Here is a 964-residue protein sequence, read N- to C-terminus: Cycloisomaltooligosaccharide glucanotransferase (964 aa).

The signal sequence occupies residues 1–30 (MRVKILPLVFMTLLLIVPSQMLLPSGQANA). CBM6 domains follow at residues 413–538 (DRYE…LTLG) and 740–863 (NMYE…LKLD).

The protein belongs to the glycosyl hydrolase 66 family.

The catalysed reaction is cyclizes part of a (1-&gt;6)-alpha-D-glucan chain by formation of a (1-&gt;6)-alpha-D-glucosidic bond.. Produces cycloisomaltooligosaccharide from dextran. This is Cycloisomaltooligosaccharide glucanotransferase (cit) from Niallia circulans (Bacillus circulans).